The following is a 638-amino-acid chain: Acetolactate synthase 2, chloroplastic (638 aa).

A chloroplast-targeting transit peptide spans methionine 1–arginine 39. Residues serine 44–glycine 67 form a disordered region. Position 112 (glutamate 112) interacts with thiamine diphosphate. A disulfide bond links cysteine 132 and cysteine 278. Residues arginine 214, histidine 320–arginine 341, and aspartate 363–aspartate 382 contribute to the FAD site. A thiamine pyrophosphate binding region spans residues glutamine 455–histidine 535. Aspartate 506 and asparagine 533 together coordinate Mg(2+).

It belongs to the TPP enzyme family. Mg(2+) is required as a cofactor. Requires thiamine diphosphate as cofactor.

The protein localises to the plastid. It is found in the chloroplast. It carries out the reaction 2 pyruvate + H(+) = (2S)-2-acetolactate + CO2. It functions in the pathway amino-acid biosynthesis; L-isoleucine biosynthesis; L-isoleucine from 2-oxobutanoate: step 1/4. It participates in amino-acid biosynthesis; L-valine biosynthesis; L-valine from pyruvate: step 1/4. In Zea mays (Maize), this protein is Acetolactate synthase 2, chloroplastic (ALS2).